The primary structure comprises 358 residues: DNA polymerase IV (358 aa).

One can recognise a UmuC domain in the interval 4 to 185 (IIHIDMDCYF…LSLRKIPGVG (182 aa)). Asp-8 and Asp-103 together coordinate Mg(2+). Glu-104 is a catalytic residue.

This sequence belongs to the DNA polymerase type-Y family. Monomer. Mg(2+) serves as cofactor.

It is found in the cytoplasm. It carries out the reaction DNA(n) + a 2'-deoxyribonucleoside 5'-triphosphate = DNA(n+1) + diphosphate. Functionally, poorly processive, error-prone DNA polymerase involved in untargeted mutagenesis. Copies undamaged DNA at stalled replication forks, which arise in vivo from mismatched or misaligned primer ends. These misaligned primers can be extended by PolIV. Exhibits no 3'-5' exonuclease (proofreading) activity. May be involved in translesional synthesis, in conjunction with the beta clamp from PolIII. In Shewanella baltica (strain OS195), this protein is DNA polymerase IV.